We begin with the raw amino-acid sequence, 381 residues long: E3 ubiquitin-protein ligase At1g63170 (381 aa).

The segment at M1–S23 is disordered. The next 2 membrane-spanning stretches (helical) occupy residues V74–V94 and V107–Y127. Positions R135–L161 are disordered. Positions P140–S152 are enriched in low complexity. Residues L170–S194 adopt a coiled-coil conformation. The next 3 membrane-spanning stretches (helical) occupy residues A189–G209, I224–I244, and G245–Q265. The RING-type; atypical zinc-finger motif lies at C325 to K366.

Its subcellular location is the membrane. The enzyme catalyses S-ubiquitinyl-[E2 ubiquitin-conjugating enzyme]-L-cysteine + [acceptor protein]-L-lysine = [E2 ubiquitin-conjugating enzyme]-L-cysteine + N(6)-ubiquitinyl-[acceptor protein]-L-lysine.. It functions in the pathway protein modification; protein ubiquitination. In terms of biological role, mediates E2-dependent protein ubiquitination. The sequence is that of E3 ubiquitin-protein ligase At1g63170 from Arabidopsis thaliana (Mouse-ear cress).